The primary structure comprises 124 residues: MAGRSEPQDDARLLQAVKIIKILYQSNPYPSPEGTRKARRNRRRRWRARQKQISEISGRVLATYLGRPPKPGDLELPELDKLSLQCVETTQDVGTSNTSQPQTATGETVPAGGNYSILGKGAKN.

Residue S5 is modified to Phosphoserine; by host CK2. Positions 19 to 27 are homomultimerization; it reads IIKILYQSN. Residues 25 to 51 form a disordered region; sequence QSNPYPSPEGTRKARRNRRRRWRARQK. The short motif at 35–51 is the Nuclear localization signal and RNA-binding (RRE) element; that stretch reads TRKARRNRRRRWRARQK. The span at 37–50 shows a compositional bias: basic residues; that stretch reads KARRNRRRRWRARQ. The Nuclear export signal and binding to XPO1 signature appears at 74–85; the sequence is LELPELDKLSLQ. Residues 90-106 show a composition bias toward polar residues; it reads TQDVGTSNTSQPQTATG. The tract at residues 90 to 124 is disordered; sequence TQDVGTSNTSQPQTATGETVPAGGNYSILGKGAKN.

It belongs to the HIV-1 REV protein family. Homomultimer; when bound to the RRE. Multimeric assembly is essential for activity and may involve XPO1. Binds to human KPNB1, XPO1, TNPO1, RANBP5 and IPO7. Interacts with the viral Integrase. Interacts with human KHDRBS1. Interacts with human NAP1; this interaction decreases Rev multimerization and stimulates its activity. Interacts with human DEAD-box helicases DDX3 and DDX24; these interactions may serve for viral RNA export to the cytoplasm and packaging, respectively. Interacts with human PSIP1; this interaction may inhibit HIV-1 DNA integration by promoting dissociation of the Integrase-LEDGF/p75 complex. Asymmetrically arginine dimethylated at one site by host PRMT6. Methylation impairs the RNA-binding activity and export of viral RNA from the nucleus to the cytoplasm. Post-translationally, phosphorylated by protein kinase CK2. Presence of, and maybe binding to the N-terminus of the regulatory beta subunit of CK2 is necessary for CK2-mediated Rev's phosphorylation.

The protein resides in the host nucleus. Its subcellular location is the host nucleolus. The protein localises to the host cytoplasm. Escorts unspliced or incompletely spliced viral pre-mRNAs (late transcripts) out of the nucleus of infected cells. These pre-mRNAs carry a recognition sequence called Rev responsive element (RRE) located in the env gene, that is not present in fully spliced viral mRNAs (early transcripts). This function is essential since most viral proteins are translated from unspliced or partially spliced pre-mRNAs which cannot exit the nucleus by the pathway used by fully processed cellular mRNAs. Rev itself is translated from a fully spliced mRNA that readily exits the nucleus. Rev's nuclear localization signal (NLS) binds directly to KPNB1/Importin beta-1 without previous binding to KPNA1/Importin alpha-1. KPNB1 binds to the GDP bound form of RAN (Ran-GDP) and targets Rev to the nucleus. In the nucleus, the conversion from Ran-GDP to Ran-GTP dissociates Rev from KPNB1 and allows Rev's binding to the RRE in viral pre-mRNAs. Rev multimerization on the RRE via cooperative assembly exposes its nuclear export signal (NES) to the surface. Rev can then form a complex with XPO1/CRM1 and Ran-GTP, leading to nuclear export of the complex. Conversion from Ran-GTP to Ran-GDP mediates dissociation of the Rev/RRE/XPO1/RAN complex, so that Rev can return to the nucleus for a subsequent round of export. Beside KPNB1, also seems to interact with TNPO1/Transportin-1, RANBP5/IPO5 and IPO7/RANBP7 for nuclear import. The nucleoporin-like HRB/RIP is an essential cofactor that probably indirectly interacts with Rev to release HIV RNAs from the perinuclear region to the cytoplasm. In Pan (chimpanzees), this protein is Protein Rev.